A 609-amino-acid polypeptide reads, in one-letter code: MPDYRSKTSTHGRNMAGARGLWRATGMKDEDFGKPIIAVVNSFTQFVPGHVHLKDLGQLVAAEIQAAGGVAKEFNTIAVDDGIAMGHDGMLYSLPSRDLIADSVEYMVNAHCADAMVCISNCDKITPGMLMAAMRLNIPVVFVSGGPMEAGKVKFRGDEKAIDLVDAMVVAADDSYTDEEVAEFERSACPTCGSCSGMFTANSMNCLTEALGLSLPGNGSIVATHANRKKLFLKAGQLIVELAKRYYEQNDASILPRSIATKAAFKNAMTLDIAMGGSTNTVLHLLAAANEAEVDFTMDDIDELSRRVPVLSKVAPAKQDVHMEDVHRAGGIMAILGELDRANLLDVSVPTVHEKTLKDALDKWDIIRTEDPDVYEFYRSSPGGVPTQVAFSQNRYYSTLDGDREKGVIRNAEHAFSKDGGLAVLYGNIALDGCIVKTAGVDESILKFTGSARVFESQDAAVEAILGNEIKAGDVVVIRYEGPRGGPGMQEMLYPTSYLKSKGLGKDCALVTDGRFSGGSSGLSIGHVSPEAAEGGAIGLVEDGDTIEIDIPNRTIHLNIDDATLAHRRTVQEAKGWHPKEERKRKVSKALKVYAMHTTSAAKGAVRVL.

Asp-81 contacts Mg(2+). Cys-122 provides a ligand contact to [2Fe-2S] cluster. 2 residues coordinate Mg(2+): Asp-123 and Lys-124. Lys-124 bears the N6-carboxylysine mark. Cys-195 lines the [2Fe-2S] cluster pocket. Residue Glu-491 coordinates Mg(2+). Residue Ser-517 is the Proton acceptor of the active site.

It belongs to the IlvD/Edd family. Homodimer. Requires [2Fe-2S] cluster as cofactor. Mg(2+) is required as a cofactor.

It carries out the reaction (2R)-2,3-dihydroxy-3-methylbutanoate = 3-methyl-2-oxobutanoate + H2O. It catalyses the reaction (2R,3R)-2,3-dihydroxy-3-methylpentanoate = (S)-3-methyl-2-oxopentanoate + H2O. The protein operates within amino-acid biosynthesis; L-isoleucine biosynthesis; L-isoleucine from 2-oxobutanoate: step 3/4. Its pathway is amino-acid biosynthesis; L-valine biosynthesis; L-valine from pyruvate: step 3/4. Functions in the biosynthesis of branched-chain amino acids. Catalyzes the dehydration of (2R,3R)-2,3-dihydroxy-3-methylpentanoate (2,3-dihydroxy-3-methylvalerate) into 2-oxo-3-methylpentanoate (2-oxo-3-methylvalerate) and of (2R)-2,3-dihydroxy-3-methylbutanoate (2,3-dihydroxyisovalerate) into 2-oxo-3-methylbutanoate (2-oxoisovalerate), the penultimate precursor to L-isoleucine and L-valine, respectively. This is Dihydroxy-acid dehydratase from Acinetobacter baumannii (strain AB0057).